Reading from the N-terminus, the 389-residue chain is MGYIGAHGVAALKKHKYSGVDHSYLAKYVLQPFWNRFVKIFPLWMPPNMITLMGFMFLLTSALLGYIYSPKLDSPPPRWVHFAHGLLLFLYQTFDAVDGKQARRTNSSSPLGELFDHGCDALGCALETMAYGSTAMCGRDTFWFWVISAVPFFGATWEHYFTNTLTLPVVNGPTEGLALIYCGHFFTAIVGAEWWAQPFGKSIPLFSWVPFLNEMQMSRIILFSMIFFAVIPTLAINTSNVYKVVHSRNGSMLLALAMLYPLVTLIAGVLIWDYLSPIDLIRNYPHLVVLGTGLAFGFLVGRMILAHLCDEPKGLKTNMCMSLLYLPFALANALTARLNDGVPLVDEFWVLLGYCIFTLSLYAHFATSVIHEITTALGIYCFRITRKEA.

8 helical membrane-spanning segments follow: residues 49–69 (MITLMGFMFLLTSALLGYIYS), 141–161 (TFWFWVISAVPFFGATWEHYF), 176–196 (GLALIYCGHFFTAIVGAEWWA), 220–240 (IILFSMIFFAVIPTLAINTSN), 252–272 (MLLALAMLYPLVTLIAGVLIW), 286–306 (HLVVLGTGLAFGFLVGRMILA), 321–338 (MSLLYLPFALANALTARL), and 350–370 (VLLGYCIFTLSLYAHFATSVI).

This sequence belongs to the CDP-alcohol phosphatidyltransferase class-I family. Mg(2+) is required as a cofactor. Mn(2+) serves as cofactor.

It is found in the membrane. The enzyme catalyses CDP-ethanolamine + a 1,2-diacyl-sn-glycerol = a 1,2-diacyl-sn-glycero-3-phosphoethanolamine + CMP + H(+). It catalyses the reaction CDP-choline + a 1,2-diacyl-sn-glycerol = a 1,2-diacyl-sn-glycero-3-phosphocholine + CMP + H(+). It functions in the pathway phospholipid metabolism; phosphatidylethanolamine biosynthesis; phosphatidylethanolamine from ethanolamine: step 3/3. Its pathway is phospholipid metabolism; phosphatidylcholine biosynthesis; phosphatidylcholine from phosphocholine: step 2/2. Catalyzes both phosphatidylcholine and phosphatidylethanolamine biosynthesis from CDP-choline and CDP-ethanolamine, respectively. Has a higher cholinephosphotransferase activity than ethanolaminephosphotransferase activity. The polypeptide is Choline/ethanolaminephosphotransferase 2 (AAPT2) (Arabidopsis thaliana (Mouse-ear cress)).